A 347-amino-acid polypeptide reads, in one-letter code: MKPIILMFIMLTIFMGTMLTMISSHWLLMWVGLEINMLAIIPILMKKISPRSTEAATKYFLTQATASMLLMFSIVINTANSGQWGITNMHNQLTSLVTMAALMMKLGMTPFHFWVPEVTQGISLMSGMLLLTWQKLAPISILLQIFPSMNPNIILLIAILSILVGGWGGLNQTQLRKILAYSSIAHMGWMMAILMYWPSLTMLNLLIYLMLTITLFSVLNINTNTTTLTLSNTWNKTPMITLTILISLLSLGGLPPLTGFLPKWTIIQELTKNSNIMLATIMAIMALLNLYFYMRLIYSTSLTMFPTLNNMKMKWQFQQTKQIFLLSPLVILATLTLPLSPALLTLN.

A run of 10 helical transmembrane segments spans residues 3-23 (PIIL…TMIS), 25-45 (HWLL…PILM), 59-79 (YFLT…INTA), 96-116 (LVTM…FWVP), 127-147 (GMLL…QIFP), 150-170 (NPNI…WGGL), 193-213 (ILMY…MLTI), 240-260 (ITLT…LTGF), 274-294 (SNIM…YFYM), and 323-343 (IFLL…SPAL).

It belongs to the complex I subunit 2 family. Core subunit of respiratory chain NADH dehydrogenase (Complex I) which is composed of 45 different subunits. Interacts with TMEM242.

It localises to the mitochondrion inner membrane. It catalyses the reaction a ubiquinone + NADH + 5 H(+)(in) = a ubiquinol + NAD(+) + 4 H(+)(out). Core subunit of the mitochondrial membrane respiratory chain NADH dehydrogenase (Complex I) which catalyzes electron transfer from NADH through the respiratory chain, using ubiquinone as an electron acceptor. Essential for the catalytic activity and assembly of complex I. The polypeptide is NADH-ubiquinone oxidoreductase chain 2 (Lemur catta (Ring-tailed lemur)).